The following is a 1088-amino-acid chain: Ran-binding protein 17 (1088 aa).

The residue at position 2 (Ala2) is an N-acetylalanine. Ser569 is modified (phosphoserine).

The protein belongs to the exportin family. As to quaternary structure, binds to nucleoporins and the GTP-bound form of Ran. As to expression, highly expressed in testis, moderately in pancreas and weakly in other tissues studied.

It localises to the cytoplasm. The protein resides in the nucleus. It is found in the nuclear pore complex. Its function is as follows. May function as a nuclear transport receptor. This chain is Ran-binding protein 17 (RANBP17), found in Homo sapiens (Human).